We begin with the raw amino-acid sequence, 234 residues long: CKLF-like MARVEL transmembrane domain-containing protein 4 (234 aa).

A compositionally biased stretch (acidic residues) spans 1-11; the sequence is MRSGEELDGFE. The tract at residues 1–38 is disordered; sequence MRSGEELDGFEGEASSTSMISGASSPYQPTTEPVSQRR. Low complexity predominate over residues 15–25; that stretch reads SSTSMISGASS. The region spanning 49–176 is the MARVEL domain; it reads YLRGALGRLK…NTFLAVQKWR (128 aa). Helical transmembrane passes span 59 to 79, 85 to 105, 123 to 143, and 151 to 171; these read VAQV…MACS, YFFE…LIMF, LVNT…LAAL, and IAAV…TFLA. Residue Ser-194 is modified to Phosphoserine.

The protein belongs to the chemokine-like factor family. In terms of assembly, interacts with PD-L1/CD274 and CMTM6. As to expression, highly expressed in testis and prostate.

It localises to the membrane. In terms of biological role, acts as a backup for CMTM6 to regulate plasma membrane expression of PD-L1/CD274, an immune inhibitory ligand critical for immune tolerance to self and antitumor immunity. May protect PD-L1/CD274 from being polyubiquitinated and targeted for degradation. This Homo sapiens (Human) protein is CKLF-like MARVEL transmembrane domain-containing protein 4.